The chain runs to 343 residues: UPF0283 membrane protein blr7254 (343 aa).

The next 3 membrane-spanning stretches (helical) occupy residues 64–84 (GALF…LGVV), 97–117 (LGFV…VVIG), and 214–234 (IVTA…VAAL).

Belongs to the UPF0283 family.

Its subcellular location is the cell inner membrane. This chain is UPF0283 membrane protein blr7254, found in Bradyrhizobium diazoefficiens (strain JCM 10833 / BCRC 13528 / IAM 13628 / NBRC 14792 / USDA 110).